Here is a 307-residue protein sequence, read N- to C-terminus: Oxygen-dependent coproporphyrinogen-III oxidase (307 aa).

Ser99 lines the substrate pocket. Residues His103 and His113 each contribute to the a divalent metal cation site. Catalysis depends on His113, which acts as the Proton donor. 115–117 (NVR) lines the substrate pocket. His152 and His182 together coordinate a divalent metal cation. Residues 247–282 (YVEFNLVFDRGTLFGLQSGGRTESILMSMPPVVNWR) are important for dimerization. Substrate is bound at residue 265 to 267 (GGR).

The protein belongs to the aerobic coproporphyrinogen-III oxidase family. Homodimer. A divalent metal cation serves as cofactor.

Its subcellular location is the cytoplasm. The catalysed reaction is coproporphyrinogen III + O2 + 2 H(+) = protoporphyrinogen IX + 2 CO2 + 2 H2O. It participates in porphyrin-containing compound metabolism; protoporphyrin-IX biosynthesis; protoporphyrinogen-IX from coproporphyrinogen-III (O2 route): step 1/1. Its function is as follows. Involved in the heme biosynthesis. Catalyzes the aerobic oxidative decarboxylation of propionate groups of rings A and B of coproporphyrinogen-III to yield the vinyl groups in protoporphyrinogen-IX. The sequence is that of Oxygen-dependent coproporphyrinogen-III oxidase from Paraburkholderia xenovorans (strain LB400).